The following is a 229-amino-acid chain: Ribonuclease 3 (229 aa).

The 132-residue stretch at 5–136 folds into the RNase III domain; it reads LAELERALGI…VIGAIYLDQG (132 aa). Glu-49 contributes to the Mg(2+) binding site. Asp-53 is an active-site residue. Positions 122 and 125 each coordinate Mg(2+). The active site involves Glu-125. The DRBM domain maps to 161 to 229; it reads DPTTRLQEIV…AQAALADIDR (69 aa).

It belongs to the ribonuclease III family. Homodimer. It depends on Mg(2+) as a cofactor.

The protein localises to the cytoplasm. It catalyses the reaction Endonucleolytic cleavage to 5'-phosphomonoester.. Its function is as follows. Digests double-stranded RNA. Involved in the processing of primary rRNA transcript to yield the immediate precursors to the large and small rRNAs (23S and 16S). Processes some mRNAs, and tRNAs when they are encoded in the rRNA operon. Processes pre-crRNA and tracrRNA of type II CRISPR loci if present in the organism. This is Ribonuclease 3 from Chloroflexus aggregans (strain MD-66 / DSM 9485).